We begin with the raw amino-acid sequence, 102 residues long: Large ribosomal subunit protein uL24 (102 aa).

Belongs to the universal ribosomal protein uL24 family. Part of the 50S ribosomal subunit.

In terms of biological role, one of two assembly initiator proteins, it binds directly to the 5'-end of the 23S rRNA, where it nucleates assembly of the 50S subunit. Functionally, one of the proteins that surrounds the polypeptide exit tunnel on the outside of the subunit. This chain is Large ribosomal subunit protein uL24, found in Burkholderia ambifaria (strain ATCC BAA-244 / DSM 16087 / CCUG 44356 / LMG 19182 / AMMD) (Burkholderia cepacia (strain AMMD)).